We begin with the raw amino-acid sequence, 425 residues long: Serine--tRNA ligase (425 aa).

L-serine is bound at residue Thr233 to Glu235. Position 264 to 266 (Arg264 to Glu266) interacts with ATP. Glu287 contacts L-serine. Glu351–Ser354 provides a ligand contact to ATP. Ser385 serves as a coordination point for L-serine.

This sequence belongs to the class-II aminoacyl-tRNA synthetase family. Type-1 seryl-tRNA synthetase subfamily. As to quaternary structure, homodimer. The tRNA molecule binds across the dimer.

It localises to the cytoplasm. It catalyses the reaction tRNA(Ser) + L-serine + ATP = L-seryl-tRNA(Ser) + AMP + diphosphate + H(+). The enzyme catalyses tRNA(Sec) + L-serine + ATP = L-seryl-tRNA(Sec) + AMP + diphosphate + H(+). It participates in aminoacyl-tRNA biosynthesis; selenocysteinyl-tRNA(Sec) biosynthesis; L-seryl-tRNA(Sec) from L-serine and tRNA(Sec): step 1/1. Functionally, catalyzes the attachment of serine to tRNA(Ser). Is also able to aminoacylate tRNA(Sec) with serine, to form the misacylated tRNA L-seryl-tRNA(Sec), which will be further converted into selenocysteinyl-tRNA(Sec). This Synechococcus sp. (strain WH7803) protein is Serine--tRNA ligase.